Reading from the N-terminus, the 74-residue chain is MSDAAVPPKKASPKKAAAKKASPKKAAARKTAAKKTAKKPAVRKPAAKKRAAPKKKPAAKKAPKKAVKKAPKKK.

The tract at residues 1-74 (MSDAAVPPKK…KAVKKAPKKK (74 aa)) is disordered. The span at 11 to 74 (ASPKKAAAKK…KAVKKAPKKK (64 aa)) shows a compositional bias: basic residues.

The protein localises to the nucleus. It localises to the chromosome. This is Histone H1.C8/H1.M1 from Trypanosoma cruzi.